A 171-amino-acid polypeptide reads, in one-letter code: CASP-like protein 5A2 (171 aa).

The Cytoplasmic portion of the chain corresponds to 1 to 39; the sequence is MDGSAHLRDPPGPAVLRWRLEDMHIIPGTSGSLALRICQ. A helical membrane pass occupies residues 40–60; the sequence is FSAAIVSFSVMISAANFSSVT. Position 61 (alanine 61) is a topological domain, extracellular. Residues 62–82 form a helical membrane-spanning segment; sequence FCFLVAAMVLQCMWSLSVATI. Residues 83-106 lie on the Cytoplasmic side of the membrane; it reads EGYAMLVGRSLRDSPLLSLFAVGD. A helical membrane pass occupies residues 107-127; it reads WVTAVITFAGACASAGIAVLV. Residues 128–148 are Extracellular-facing; it reads GRDIHRGCDVNFCGRYAAAAG. Residues 149–169 form a helical membrane-spanning segment; the sequence is MAFLSWLLISTSFLFTFWLLA. Over 170–171 the chain is Cytoplasmic; it reads TR.

Belongs to the Casparian strip membrane proteins (CASP) family. As to quaternary structure, homodimer and heterodimers.

Its subcellular location is the cell membrane. The polypeptide is CASP-like protein 5A2 (Pteridium aquilinum subsp. aquilinum (Bracken fern)).